The chain runs to 252 residues: 3-deoxy-manno-octulosonate cytidylyltransferase (252 aa).

This sequence belongs to the KdsB family.

The protein localises to the cytoplasm. The catalysed reaction is 3-deoxy-alpha-D-manno-oct-2-ulosonate + CTP = CMP-3-deoxy-beta-D-manno-octulosonate + diphosphate. It participates in nucleotide-sugar biosynthesis; CMP-3-deoxy-D-manno-octulosonate biosynthesis; CMP-3-deoxy-D-manno-octulosonate from 3-deoxy-D-manno-octulosonate and CTP: step 1/1. The protein operates within bacterial outer membrane biogenesis; lipopolysaccharide biosynthesis. In terms of biological role, activates KDO (a required 8-carbon sugar) for incorporation into bacterial lipopolysaccharide in Gram-negative bacteria. This Vibrio campbellii (strain ATCC BAA-1116) protein is 3-deoxy-manno-octulosonate cytidylyltransferase.